A 545-amino-acid polypeptide reads, in one-letter code: E3 ubiquitin-protein ligase ipaH9.8 (545 aa).

Residues 1 to 242 (MLPINNNFSL…YHGPRIYFSM (242 aa)) are interaction with target proteins. LRR repeat units lie at residues 57 to 77 (NSDE…NLPA), 78 to 99 (QITL…PVTL), 100 to 117 (KKLY…VLPP), 118 to 139 (ALES…PDSL), 140 to 157 (LTMN…SLPQ), 158 to 179 (ALKN…SEGN), 182 to 203 (VVRE…ILNL), and 205 to 228 (NECS…QRLT). Residues 243-250 (SDGQQNTL) are linker. Residues 251-545 (HRPLADAVTA…SENGSQLHHS (295 aa)) form an E3 ubiquitin-protein ligase catalytic domain region. Residues 253–545 (PLADAVTAWF…SENGSQLHHS (293 aa)) enclose the NEL domain. Cysteine 337 (glycyl thioester intermediate) is an active-site residue.

This sequence belongs to the LRR-containing bacterial E3 ligase family. Also interacts with human and mouse U2AF1 (U2AF35). Ubiquitinated in the presence of host E1 ubiquitin-activating enzyme, E2 ubiquitin-conjugating enzyme and ubiquitin.

Its subcellular location is the secreted. It localises to the host cytoplasm. The protein localises to the host nucleus. It catalyses the reaction S-ubiquitinyl-[E2 ubiquitin-conjugating enzyme]-L-cysteine + [acceptor protein]-L-lysine = [E2 ubiquitin-conjugating enzyme]-L-cysteine + N(6)-ubiquitinyl-[acceptor protein]-L-lysine.. With respect to regulation, exists in an autoinhibited state in the absence of substrate protein, due to interactions of the leucine-rich repeats with NEL domain. Is activated upon binding to a substrate protein. Functionally, effector E3 ubiquitin ligase that interferes with host's ubiquitination pathway and modulates the acute inflammatory responses, thus facilitating bacterial colonization within the host cell. Interacts with IKBKG (NEMO) and TNIP1 (ABIN-1), a ubiquitin-binding adapter protein, which results in TNIP1-dependent 'Lys-27'-linked polyubiquitination of IKBKG. Consequently, polyubiquitinated IKBKG undergoes proteasome-dependent degradation, which perturbs NF-kappa-B activation during bacterial infection. Mediates polyubiquitination of host U2AF1, leading to its proteasomal degradation. Catalyzes 'Lys-48'-linked polyubiquitination and subsequent degradation of a subset of host guanylate-binding proteins (GBP1, GBP2, GBP4 and GBP6), thereby suppressing host cell defense. In contrast, host GBP3 and GBP7 are not ubiquitinated by IpaH9.8. Uses UBE2D2 (UBCH5B) as an E2 ubiquitin-conjugating enzyme. The protein is E3 ubiquitin-protein ligase ipaH9.8 (ipaH9.8) of Shigella sonnei (strain Ss046).